A 398-amino-acid chain; its full sequence is MTAFKTLDDIGDVTGKRVLVRVDLNVPMIDGAVSDATRIQAAMPTIRELSDKGAIVLLLAHFGRPKGAKNPTQSLSLVMGGVEDVLGHSVMFIPEAVGEGAKAGVAVLAPGDVAVLENTRFYPGEEQNDPAFADALAEIGDLYVNDAFSAAHRAHGSTEGIARRLPAYAGRAMEAELKALDAALGNPVQPVAAVVGGAKVSSKIDVLRNLVGKVDHLIIGGGMANTFLAARGVDVGRSLCEHELVDTANAIFDAADAAGCTIHLPYDVVVAKEFAPNPPTRTVNVHEVAADEMILDVGPAAIEALADVLKNCRTLVWNGPLGAFETPPFDTATVALARTAAALTREGSLTSVAGGGDTVAALNHAGVAGDFTFVSTAGGAFLEWMEGKPLPGVDALKA.

Substrate contacts are provided by residues Asp23–Asn25, Arg38, His61–Arg64, Arg120, and Arg153. ATP is bound by residues Lys203, Glu325, and Gly355–Thr358.

It belongs to the phosphoglycerate kinase family. In terms of assembly, monomer.

The protein resides in the cytoplasm. It carries out the reaction (2R)-3-phosphoglycerate + ATP = (2R)-3-phospho-glyceroyl phosphate + ADP. The protein operates within carbohydrate degradation; glycolysis; pyruvate from D-glyceraldehyde 3-phosphate: step 2/5. The chain is Phosphoglycerate kinase from Sphingopyxis alaskensis (strain DSM 13593 / LMG 18877 / RB2256) (Sphingomonas alaskensis).